Here is a 247-residue protein sequence, read N- to C-terminus: 1-(5-phosphoribosyl)-5-[(5-phosphoribosylamino)methylideneamino] imidazole-4-carboxamide isomerase (247 aa).

Asp-8 functions as the Proton acceptor in the catalytic mechanism. The Proton donor role is filled by Asp-130.

This sequence belongs to the HisA/HisF family.

It is found in the cytoplasm. The catalysed reaction is 1-(5-phospho-beta-D-ribosyl)-5-[(5-phospho-beta-D-ribosylamino)methylideneamino]imidazole-4-carboxamide = 5-[(5-phospho-1-deoxy-D-ribulos-1-ylimino)methylamino]-1-(5-phospho-beta-D-ribosyl)imidazole-4-carboxamide. Its pathway is amino-acid biosynthesis; L-histidine biosynthesis; L-histidine from 5-phospho-alpha-D-ribose 1-diphosphate: step 4/9. This is 1-(5-phosphoribosyl)-5-[(5-phosphoribosylamino)methylideneamino] imidazole-4-carboxamide isomerase from Leptospira biflexa serovar Patoc (strain Patoc 1 / Ames).